We begin with the raw amino-acid sequence, 530 residues long: Type 2 DNA topoisomerase 6 subunit B (530 aa).

Residues Asn-42, Asp-76, Ser-96–Lys-98, Met-107–Lys-113, and Lys-427 each bind ATP.

It belongs to the TOP6B family. In terms of assembly, homodimer. Heterotetramer of two Top6A and two Top6B chains.

It catalyses the reaction ATP-dependent breakage, passage and rejoining of double-stranded DNA.. With respect to regulation, not inhibited by the DNA gyrase inhibitor novobiocin, instead inhibited by eukaryotic topoisomerase inhibitors such as m- and o-amsacrine, ellipticine, and the quinolone CP-115,953. Radicicol inhibits the ATPase activity. Its function is as follows. Relaxes both positive and negative supercoils and exhibits a strong decatenase and unknotting activity; it cannot introduce DNA supercoils. ATP is absolutely required for DNA cleavage; the nonhydrolyzable analog AMP-PNP generates nicked or linear products from a supercoiled dsDNA substrate. Generates staggered two-nucleotide long 5' overhangs. The enzyme is covalently attached transiently to the 5'-ends of the cleaved strands. The sequence is that of Type 2 DNA topoisomerase 6 subunit B from Saccharolobus shibatae (strain ATCC 51178 / DSM 5389 / JCM 8931 / NBRC 15437 / B12) (Sulfolobus shibatae).